Reading from the N-terminus, the 515-residue chain is Na(+)/H(+) antiporter NhaB (515 aa).

13 helical membrane passes run 23-43 (IIVF…FIAG), 44-64 (WCLV…YPLQ), 88-108 (IMAS…IYFM), 119-139 (LLIT…SAAF), 143-163 (FLDA…FYGV), 202-222 (LMMH…VGEP), 238-258 (FFIR…ITCV), 303-323 (GIIG…VGLI), 324-344 (GLSV…STIG), 357-377 (LVVF…GPII), 389-409 (LLLF…VFVA), 447-467 (ATPN…APLI), and 477-497 (MALP…EYIL).

Belongs to the NhaB Na(+)/H(+) (TC 2.A.34) antiporter family.

The protein localises to the cell inner membrane. It carries out the reaction 2 Na(+)(in) + 3 H(+)(out) = 2 Na(+)(out) + 3 H(+)(in). Its function is as follows. Na(+)/H(+) antiporter that extrudes sodium in exchange for external protons. The sequence is that of Na(+)/H(+) antiporter NhaB from Mannheimia succiniciproducens (strain KCTC 0769BP / MBEL55E).